Reading from the N-terminus, the 492-residue chain is RNA-binding protein Nova-2 (492 aa).

Positions 10–26 match the Bipartite nuclear localization signal motif; that stretch reads KRPLETPPEVVCTKRSN. The region spanning 32–99 is the KH 1 domain; sequence EYFLKVLIPS…EALNAVHSFI (68 aa). Residue lysine 112 forms a Glycyl lysine isopeptide (Lys-Gly) (interchain with G-Cter in SUMO2) linkage. 2 KH domains span residues 130–196 and 406–473; these read AKQA…VSAI and KELV…QYLI.

Interacts with PTBP2; the interaction is direct. As to expression, brain. Expression restricted to astrocytes.

The protein localises to the nucleus. Functions to regulate alternative splicing in neurons by binding pre-mRNA in a sequence-specific manner to activate exon inclusion or exclusion. It binds specifically to the sequences 5'-YCAY-3' and regulates splicing in only a subset of regulated exons. Binding to an exonic 5'-YCAY-3' cluster changes the protein complexes assembled on pre-mRNA, blocking U1 snRNP binding and exon inclusion, whereas binding to an intronic 5'-YCAY-3' cluster enhances spliceosome assembly and exon inclusion. With NOVA1, they perform unique biological functions in different brain areas and cell types. Uniquely regulates alternative splicing events of a series of axon guidance related genes during cortical development, being essential for central nervous system development by regulating neural networks wiring. Regulates differentially alternative splicing on the same transcripts expressed in different neurons. This includes functional differences in transcripts expressed in cortical and cerebellar excitatory versus inhibitory neurons where is required for, respectively, development of laminar structure and motor coordination and synapse formation. Also the regulation the regulation of intron retention can sequester the trans-acting splicing factor PTBP2, acting as a variable cis-acting scaffolding platform for PTBP2 across various natural conditions. In Homo sapiens (Human), this protein is RNA-binding protein Nova-2.